The primary structure comprises 1188 residues: uncharacterized protein (1188 aa).

3 helical membrane-spanning segments follow: residues Phe73–Met93, Ile878–Ile898, and Val1089–Ile1109.

The protein resides in the membrane. This is an uncharacterized protein from Saccharomyces cerevisiae (strain ATCC 204508 / S288c) (Baker's yeast).